A 358-amino-acid chain; its full sequence is Alanine racemase (358 aa).

K35 (proton acceptor; specific for D-alanine) is an active-site residue. K35 is modified (N6-(pyridoxal phosphate)lysine). R130 serves as a coordination point for substrate. Residue Y255 is the Proton acceptor; specific for L-alanine of the active site. M303 contributes to the substrate binding site.

This sequence belongs to the alanine racemase family. The cofactor is pyridoxal 5'-phosphate.

The catalysed reaction is L-alanine = D-alanine. The protein operates within amino-acid biosynthesis; D-alanine biosynthesis; D-alanine from L-alanine: step 1/1. Catalyzes the interconversion of L-alanine and D-alanine. May also act on other amino acids. In Shewanella baltica (strain OS223), this protein is Alanine racemase (alr).